A 417-amino-acid chain; its full sequence is UPF0761 membrane protein CV_0810 (417 aa).

A run of 7 helical transmembrane segments spans residues 52 to 72 (LLALVPLFTIALSVISAFPVF), 79 to 99 (FKIMLLSTLVPEFAGKVITVY), 110 to 130 (LTAAGIVMLGVTALMLMSTIE), 150 to 170 (MVYWTVLTLGPLVLGGSLLSW), 185 to 205 (LLASVLEAGGTIVLTALVLAL), 214 to 234 (FVPFRHAVWGALVTSVLLELT), and 258 to 278 (IPIFLLWVYCLWLVVLAGAVF).

Belongs to the UPF0761 family.

It localises to the cell inner membrane. This Chromobacterium violaceum (strain ATCC 12472 / DSM 30191 / JCM 1249 / CCUG 213 / NBRC 12614 / NCIMB 9131 / NCTC 9757 / MK) protein is UPF0761 membrane protein CV_0810.